We begin with the raw amino-acid sequence, 110 residues long: Iron-sulfur cluster assembly protein CyaY (110 aa).

This sequence belongs to the frataxin family.

Functionally, involved in iron-sulfur (Fe-S) cluster assembly. May act as a regulator of Fe-S biogenesis. This chain is Iron-sulfur cluster assembly protein CyaY, found in Stutzerimonas stutzeri (strain A1501) (Pseudomonas stutzeri).